The chain runs to 1250 residues: TBC1 domain family member 9B (1250 aa).

GRAM domains follow at residues 142–209 and 288–356; these read LKMR…EKNA and ECYR…EKAD. Threonine 397 carries the phosphothreonine modification. Residues 397–443 are disordered; it reads TPSKQPGSIGSRKASVVDPSTESSPAPQEGSEQPASPASPLSSRQSF. A phosphoserine mark is found at serine 411, serine 432, serine 435, and serine 463. The segment covering 414 to 443 has biased composition (polar residues); it reads DPSTESSPAPQEGSEQPASPASPLSSRQSF. The Rab-GAP TBC domain maps to 508 to 695; sequence GIPESLRGEL…VIVDCFFYEG (188 aa). A helical transmembrane segment spans residues 668–688; it reads LSWFLTLFLSVMPFESAVVIV. Residues 879-914 enclose the EF-hand domain; that stretch reads HTPLLAGRMFRLLDENKDSLINFKEFVTGMSGMYHG. 3 disordered regions span residues 974-999, 1069-1093, and 1128-1157; these read LPQE…PDYR, SART…ELHQ, and VEGG…MSSY. Residues 984 to 999 are compositionally biased toward basic and acidic residues; the sequence is SEERGEEKGTSSPDYR. Phosphoserine is present on serine 1241.

The protein resides in the membrane. In terms of biological role, may act as a GTPase-activating protein for Rab family protein(s). The chain is TBC1 domain family member 9B (TBC1D9B) from Homo sapiens (Human).